The sequence spans 59 residues: Putative HTH-type transcriptional regulator YneL (59 aa).

In terms of domain architecture, HTH araC/xylS-type spans 1-59 (MSPLRYQKWLRLNEVRRQMLNEHYDVTTAAYAVGYESYPISVGNIRGCLESHPREILPG). A DNA-binding region (H-T-H motif) is located at residues 26 to 49 (VTTAAYAVGYESYPISVGNIRGCL).

The protein is Putative HTH-type transcriptional regulator YneL (yneL) of Escherichia coli (strain K12).